A 60-amino-acid polypeptide reads, in one-letter code: MAKKTIKVTQTRSSIGRLPKHKATLRGLGLRRIGHTVELEDTAAVRGMVNRVNYMIKVEG.

Belongs to the universal ribosomal protein uL30 family. In terms of assembly, part of the 50S ribosomal subunit.

The protein is Large ribosomal subunit protein uL30 of Idiomarina loihiensis (strain ATCC BAA-735 / DSM 15497 / L2-TR).